The sequence spans 446 residues: Tubulin beta chain (446 aa).

GTP-binding residues include glutamine 11, glutamate 69, serine 138, glycine 142, threonine 143, glycine 144, asparagine 204, and asparagine 226. Glutamate 69 is a binding site for Mg(2+). The interval glutamine 423–glutamine 446 is disordered. Residues threonine 429–glutamine 446 show a composition bias toward acidic residues.

The protein belongs to the tubulin family. In terms of assembly, dimer of alpha and beta chains. A typical microtubule is a hollow water-filled tube with an outer diameter of 25 nm and an inner diameter of 15 nM. Alpha-beta heterodimers associate head-to-tail to form protofilaments running lengthwise along the microtubule wall with the beta-tubulin subunit facing the microtubule plus end conferring a structural polarity. Microtubules usually have 13 protofilaments but different protofilament numbers can be found in some organisms and specialized cells. The cofactor is Mg(2+).

The protein resides in the cytoplasm. It is found in the cytoskeleton. Its function is as follows. Tubulin is the major constituent of microtubules, a cylinder consisting of laterally associated linear protofilaments composed of alpha- and beta-tubulin heterodimers. Microtubules grow by the addition of GTP-tubulin dimers to the microtubule end, where a stabilizing cap forms. Below the cap, tubulin dimers are in GDP-bound state, owing to GTPase activity of alpha-tubulin. In Pleurotus sajor-caju (Oyster mushroom), this protein is Tubulin beta chain.